Here is a 341-residue protein sequence, read N- to C-terminus: RNA 3'-terminal phosphate cyclase (341 aa).

Residues Gln-102 and 283-287 (HLADQ) contribute to the ATP site. The active-site Tele-AMP-histidine intermediate is the His-308.

This sequence belongs to the RNA 3'-terminal cyclase family. Type 1 subfamily.

The protein resides in the cytoplasm. The enzyme catalyses a 3'-end 3'-phospho-ribonucleotide-RNA + ATP = a 3'-end 2',3'-cyclophospho-ribonucleotide-RNA + AMP + diphosphate. Its function is as follows. Catalyzes the conversion of 3'-phosphate to a 2',3'-cyclic phosphodiester at the end of RNA. The mechanism of action of the enzyme occurs in 3 steps: (A) adenylation of the enzyme by ATP; (B) transfer of adenylate to an RNA-N3'P to produce RNA-N3'PP5'A; (C) and attack of the adjacent 2'-hydroxyl on the 3'-phosphorus in the diester linkage to produce the cyclic end product. The biological role of this enzyme is unknown but it is likely to function in some aspects of cellular RNA processing. The protein is RNA 3'-terminal phosphate cyclase of Pseudomonas aeruginosa (strain UCBPP-PA14).